The sequence spans 462 residues: Iroquois-class homeodomain protein irx-1-B (462 aa).

The segment at residues Asp-121–Asn-183 is a DNA-binding region (homeobox; TALE-type). Disordered stretches follow at residues Gly-191–Lys-302, Ser-314–Ala-339, and Ser-405–Ala-462. 2 stretches are compositionally biased toward acidic residues: residues Glu-210–Ile-220 and Asn-228–Glu-239. The segment covering Lys-240–Glu-257 has biased composition (basic and acidic residues). Basic and acidic residues predominate over residues Arg-410–Pro-426. A compositionally biased stretch (polar residues) spans Phe-446–Ile-455.

It belongs to the TALE/IRO homeobox family.

It localises to the nucleus. Functionally, acts partially redundantly with other irx members in neural patterning. Required for formation of the posterior forebrain, midbrain, hindbrain, and to a lesser extent, spinal cord. Acts early in neural plate development to induce expression of some but not all proneural genes, and specify a neural precursor state. Also up-regulates repressors that prevent neuronal differentiation. Patterns the neuroectoderm in both the anterior/posterior and dorsal/ventral axes. Acts primarily as a transcriptional repressor during neural development, and binds to the bmp4 promoter to repress gene expression and thus mediate down-regulation of bmp4 by wnt signaling. Controls multiple processes through bmp4-repression including neural plate development, neural crest specification and Spemann organizer development. Involved in the specification of the preplacodal field at the anterior border of the neural plate. Regulates the genetic cascade of interactions that are necessary for positioning the isthmus organizer and the formation of the midbrain-hindbrain boundary. Required during at least two stages of pronephros kidney development; during neurula stages, maintains transcription of key renal genes to define the size and identity of the pronephric anlage, probably in part through regulation of bmp-signaling. Subsequently required for proper formation of the intermediate tubule segment of the pronephros. Acts principally as a transcriptional activator during pronephros development. This Xenopus laevis (African clawed frog) protein is Iroquois-class homeodomain protein irx-1-B (irx1-b).